Reading from the N-terminus, the 523-residue chain is MDRELVRTVKLATKNHAGVLFRRAVRHLPHIVAVTALVAAAPRLSTLLAAAAAGGSTMRWARALWSDLAGELGPSAPALAVACWAAALAAYTYAASRPRPVYLIDLAGYKAPREHEASRAKTIAHFGRCGRFSGESMAFQKRMLERSGLGEATHFPTSLISLPVDMCLRTAREESHAVIFGVVDEVLRKSGVAAADVGVLIFNSSLLSPTPSFTSLIVNRYGMRPGVVSHNLSGMGCSAGIIAIDLAKRLLQVHENTYALVVSTENITLNAYMGNNRPMLVTNTLFRVGGAAILLSNRAADRRGRAKYQLIHTVRTHRGAHDQSFGCVTQEEDDAGEVGVSLSKELMVVAGEALKTNITTLGPLVLPISEQLRFLATVVLKRVFRADVKAYLPDFKLALDHFCIHAGGRGVLDELEKSLKLSPWDMEPSRMTLYRFGNTSSSSLWYELAYCEAKGRIKRGDRVWQIAFGSGFKCNSAVWRALRTVDAAGLDAGDNPWMKEVDMLPVDVPKVAPIDETSYQIPN.

The next 2 helical transmembrane spans lie at 31-55 and 78-96; these read IVAVTALVAAAPRLSTLLAAAAAGG and ALAVACWAAALAAYTYAAS. In terms of domain architecture, FAE spans 93-382; sequence YAASRPRPVY…RFLATVVLKR (290 aa). Residues Cys237, His317, His401, His405, and Asn438 contribute to the active site.

It belongs to the thiolase-like superfamily. Chalcone/stilbene synthases family. Highly expressed in leaf sheaths. Expressed in leaves, flag leaves and panicles.

It is found in the membrane. It catalyses the reaction a very-long-chain acyl-CoA + malonyl-CoA + H(+) = a very-long-chain 3-oxoacyl-CoA + CO2 + CoA. Its function is as follows. Contributes to fatty acids elongation. Plays a role in controlling leaf anatomy and plant architecture. The chain is Probable 3-ketoacyl-CoA synthase 20 from Oryza sativa subsp. japonica (Rice).